We begin with the raw amino-acid sequence, 186 residues long: Elongation factor P (186 aa).

It belongs to the elongation factor P family.

It localises to the cytoplasm. It functions in the pathway protein biosynthesis; polypeptide chain elongation. In terms of biological role, involved in peptide bond synthesis. Stimulates efficient translation and peptide-bond synthesis on native or reconstituted 70S ribosomes in vitro. Probably functions indirectly by altering the affinity of the ribosome for aminoacyl-tRNA, thus increasing their reactivity as acceptors for peptidyl transferase. This is Elongation factor P from Streptococcus sanguinis (strain SK36).